Consider the following 151-residue polypeptide: Deoxyuridine 5'-triphosphate nucleotidohydrolase (151 aa).

Substrate-binding positions include 70-72 (RSG), Asn-83, 87-89 (LID), and Met-97.

Belongs to the dUTPase family. Mg(2+) serves as cofactor.

It carries out the reaction dUTP + H2O = dUMP + diphosphate + H(+). It functions in the pathway pyrimidine metabolism; dUMP biosynthesis; dUMP from dCTP (dUTP route): step 2/2. In terms of biological role, this enzyme is involved in nucleotide metabolism: it produces dUMP, the immediate precursor of thymidine nucleotides and it decreases the intracellular concentration of dUTP so that uracil cannot be incorporated into DNA. This is Deoxyuridine 5'-triphosphate nucleotidohydrolase from Sodalis glossinidius (strain morsitans).